Reading from the N-terminus, the 217-residue chain is Protein-methionine-sulfoxide reductase heme-binding subunit MsrQ (217 aa).

4 consecutive transmembrane segments (helical) span residues 82–102 (MLGL…LLVD), 118–138 (PFIT…ATST), 150–170 (WQWL…HYWW), and 180–200 (EVSI…WWVW).

It belongs to the MsrQ family. Heterodimer of a catalytic subunit (MsrP) and a heme-binding subunit (MsrQ). Requires FMN as cofactor. The cofactor is heme b.

It is found in the cell inner membrane. Its function is as follows. Part of the MsrPQ system that repairs oxidized periplasmic proteins containing methionine sulfoxide residues (Met-O), using respiratory chain electrons. Thus protects these proteins from oxidative-stress damage caused by reactive species of oxygen and chlorine generated by the host defense mechanisms. MsrPQ is essential for the maintenance of envelope integrity under bleach stress, rescuing a wide series of structurally unrelated periplasmic proteins from methionine oxidation. MsrQ provides electrons for reduction to the reductase catalytic subunit MsrP, using the quinone pool of the respiratory chain. The polypeptide is Protein-methionine-sulfoxide reductase heme-binding subunit MsrQ (Ralstonia nicotianae (strain ATCC BAA-1114 / GMI1000) (Ralstonia solanacearum)).